Consider the following 152-residue polypeptide: Endoribonuclease YbeY (152 aa).

The Zn(2+) site is built by histidine 112, histidine 116, and histidine 122.

This sequence belongs to the endoribonuclease YbeY family. Requires Zn(2+) as cofactor.

Its subcellular location is the cytoplasm. Single strand-specific metallo-endoribonuclease involved in late-stage 70S ribosome quality control and in maturation of the 3' terminus of the 16S rRNA. The chain is Endoribonuclease YbeY from Pseudoalteromonas translucida (strain TAC 125).